Reading from the N-terminus, the 191-residue chain is Holliday junction branch migration complex subunit RuvA (191 aa).

Positions 1–64 (MIGRITGTLA…EDAHLLYGFG (64 aa)) are domain I. Residues 65-138 (SEVERAAFRE…KGKPVFAGAL (74 aa)) are domain II. Positions 138–141 (LASV) are flexible linker. Residues 142-191 (PSAGASDDVRQALLALGYNERETAATVRELPAGLAVGEAIRQALRALSRA) are domain III.

This sequence belongs to the RuvA family. Homotetramer. Forms an RuvA(8)-RuvB(12)-Holliday junction (HJ) complex. HJ DNA is sandwiched between 2 RuvA tetramers; dsDNA enters through RuvA and exits via RuvB. An RuvB hexamer assembles on each DNA strand where it exits the tetramer. Each RuvB hexamer is contacted by two RuvA subunits (via domain III) on 2 adjacent RuvB subunits; this complex drives branch migration. In the full resolvosome a probable DNA-RuvA(4)-RuvB(12)-RuvC(2) complex forms which resolves the HJ.

It localises to the cytoplasm. Functionally, the RuvA-RuvB-RuvC complex processes Holliday junction (HJ) DNA during genetic recombination and DNA repair, while the RuvA-RuvB complex plays an important role in the rescue of blocked DNA replication forks via replication fork reversal (RFR). RuvA specifically binds to HJ cruciform DNA, conferring on it an open structure. The RuvB hexamer acts as an ATP-dependent pump, pulling dsDNA into and through the RuvAB complex. HJ branch migration allows RuvC to scan DNA until it finds its consensus sequence, where it cleaves and resolves the cruciform DNA. The polypeptide is Holliday junction branch migration complex subunit RuvA (Thiobacillus denitrificans (strain ATCC 25259 / T1)).